The primary structure comprises 623 residues: UvrABC system protein C (623 aa).

Positions 13–92 (DKPGVYIMKN…IKKYKPRYNI (80 aa)) constitute a GIY-YIG domain. Residues 204–239 (NDIIRELKEEMEKASMNLDFEKAADLRDKMLAAQKV) enclose the UVR domain.

This sequence belongs to the UvrC family. As to quaternary structure, interacts with UvrB in an incision complex.

It localises to the cytoplasm. Its function is as follows. The UvrABC repair system catalyzes the recognition and processing of DNA lesions. UvrC both incises the 5' and 3' sides of the lesion. The N-terminal half is responsible for the 3' incision and the C-terminal half is responsible for the 5' incision. This is UvrABC system protein C from Clostridium acetobutylicum (strain ATCC 824 / DSM 792 / JCM 1419 / IAM 19013 / LMG 5710 / NBRC 13948 / NRRL B-527 / VKM B-1787 / 2291 / W).